Consider the following 486-residue polypeptide: UDP-N-acetylmuramate--L-alanine ligase (486 aa).

126-132 serves as a coordination point for ATP; sequence GTHGKTT.

This sequence belongs to the MurCDEF family.

The protein localises to the cytoplasm. It catalyses the reaction UDP-N-acetyl-alpha-D-muramate + L-alanine + ATP = UDP-N-acetyl-alpha-D-muramoyl-L-alanine + ADP + phosphate + H(+). It participates in cell wall biogenesis; peptidoglycan biosynthesis. Cell wall formation. This is UDP-N-acetylmuramate--L-alanine ligase from Pectobacterium atrosepticum (strain SCRI 1043 / ATCC BAA-672) (Erwinia carotovora subsp. atroseptica).